Consider the following 200-residue polypeptide: Protein-methionine-sulfoxide reductase heme-binding subunit MsrQ (200 aa).

Helical transmembrane passes span 8–28 (ITWL…WLFY), 54–74 (LLLA…PLLI), 79–99 (LLGL…SLLE), 116–136 (PYLT…LTSF), and 153–173 (FIYL…KILS).

It belongs to the MsrQ family. In terms of assembly, heterodimer of a catalytic subunit (MsrP) and a heme-binding subunit (MsrQ). FMN serves as cofactor. Heme b is required as a cofactor.

The protein resides in the cell inner membrane. Part of the MsrPQ system that repairs oxidized periplasmic proteins containing methionine sulfoxide residues (Met-O), using respiratory chain electrons. Thus protects these proteins from oxidative-stress damage caused by reactive species of oxygen and chlorine generated by the host defense mechanisms. MsrPQ is essential for the maintenance of envelope integrity under bleach stress, rescuing a wide series of structurally unrelated periplasmic proteins from methionine oxidation. MsrQ provides electrons for reduction to the reductase catalytic subunit MsrP, using the quinone pool of the respiratory chain. In Cronobacter sakazakii (strain ATCC BAA-894) (Enterobacter sakazakii), this protein is Protein-methionine-sulfoxide reductase heme-binding subunit MsrQ.